The primary structure comprises 166 residues: Putative pre-16S rRNA nuclease (166 aa).

Residues 1–24 are disordered; sequence MPDTAAPTPDRPGPDDPGRGRRLG.

It belongs to the YqgF nuclease family.

Its subcellular location is the cytoplasm. Functionally, could be a nuclease involved in processing of the 5'-end of pre-16S rRNA. The sequence is that of Putative pre-16S rRNA nuclease from Mycobacteroides abscessus (strain ATCC 19977 / DSM 44196 / CCUG 20993 / CIP 104536 / JCM 13569 / NCTC 13031 / TMC 1543 / L948) (Mycobacterium abscessus).